Consider the following 535-residue polypeptide: Alpha-1,3-mannosyl-glycoprotein 4-beta-N-acetylglucosaminyltransferase A (535 aa).

Residues 1 to 4 are Cytoplasmic-facing; the sequence is MRLR. The chain crosses the membrane as a helical; Signal-anchor for type II membrane protein span at residues 5–27; sequence NGTVATALAFITSFLTLSWYTTW. Residues 28–63 adopt a coiled-coil conformation; it reads QNGKEKLIAYQREFLALKERLRIAEHRISQRSSELN. Over 28–535 the chain is Lumenal; the sequence is QNGKEKLIAY…NEIHIKKATN (508 aa). 2 N-linked (GlcNAc...) asparagine glycosylation sites follow: Asn77 and Asn458. Ser474 bears the Phosphoserine mark.

This sequence belongs to the glycosyltransferase 54 family. The cofactor is a divalent metal cation. N-glycosylated.

The protein localises to the golgi apparatus membrane. Its subcellular location is the secreted. The catalysed reaction is N(4)-{beta-D-GlcNAc-(1-&gt;2)-alpha-D-Man-(1-&gt;3)-[beta-D-GlcNAc-(1-&gt;2)-alpha-D-Man-(1-&gt;6)]-beta-D-Man-(1-&gt;4)-beta-D-GlcNAc-(1-&gt;4)-beta-D-GlcNAc}-L-asparaginyl-[protein] + UDP-N-acetyl-alpha-D-glucosamine = N(4)-{beta-D-GlcNAc-(1-&gt;2)-[beta-D-GlcNAc-(1-&gt;4)]-alpha-D-Man-(1-&gt;3)-[beta-D-GlcNAc-(1-&gt;2)-alpha-D-Man-(1-&gt;6)]-beta-D-Man-(1-&gt;4)-beta-D-GlcNAc-(1-&gt;4)-beta-D-GlcNAc}-L-asparaginyl-[protein] + UDP + H(+). The enzyme catalyses an N(4)-{beta-D-GlcNAc-(1-&gt;2)-alpha-D-Man-(1-&gt;3)-[alpha-D-Man-(1-&gt;6)]-beta-D-Man-(1-&gt;4)-beta-D-GlcNAc-(1-&gt;4)-beta-D-GlcNAc}-L-asparaginyl-[protein] + UDP-N-acetyl-alpha-D-glucosamine = an N(4)-{beta-D-GlcNAc-(1-&gt;2)-[beta-D-GlcNAc-(1-&gt;4)]-alpha-D-Man-(1-&gt;3)-[alpha-D-Man-(1-&gt;6)]-beta-D-Man-(1-&gt;4)-beta-D-GlcNAc-(1-&gt;4)-beta-D-GlcNAc}-L-asparaginyl-[protein] + UDP + H(+). It carries out the reaction an N(4)-{beta-D-GlcNAc-(1-&gt;2)-alpha-D-Man-(1-&gt;3)-[beta-D-GlcNAc-(1-&gt;2)-[beta-D-GlcNAc-(1-&gt;6)]-alpha-D-Man-(1-&gt;6)]-beta-D-Man-(1-&gt;4)-beta-D-GlcNAc-(1-&gt;4)-beta-D-GlcNAc}-L-asparaginyl-[protein] + UDP-N-acetyl-alpha-D-glucosamine = an N(4)-{beta-D-GlcNAc-(1-&gt;2)-[beta-D-GlcNAc-(1-&gt;4)]-alpha-D-Man-(1-&gt;3)-[beta-D-GlcNAc-(1-&gt;2)-[beta-D-GlcNAc-(1-&gt;6)]-alpha-D-Man-(1-&gt;6)]-beta-D-Man-(1-&gt;4)-beta-D-GlcNAc-(1-&gt;4)-beta-D-GlcNAc}-L-asparaginyl-[protein] + UDP + H(+). It catalyses the reaction an N(4)-{beta-D-GlcNAc-(1-&gt;2)-alpha-D-Man-(1-&gt;3)-[beta-D-GlcNAc-(1-&gt;2)-alpha-D-Man-(1-&gt;6)]-beta-D-Man-(1-&gt;4)-beta-D-GlcNAc-(1-&gt;4)-[alpha-L-Fuc-(1-&gt;6)]-beta-D-GlcNAc}-L-asparaginyl-[protein] + UDP-N-acetyl-alpha-D-glucosamine = N(4)-{beta-D-GlcNAc-(1-&gt;2)-[beta-D-GlcNAc-(1-&gt;4)]-alpha-D-Man-(1-&gt;3)-[beta-D-GlcNAc-(1-&gt;2)-alpha-D-Man-(1-&gt;6)]-beta-D-Man-(1-&gt;4)-beta-D-GlcNAc-(1-&gt;4)-[alpha-L-Fuc-(1-&gt;6)]-beta-D-GlcNAc}-asparaginyl-[protein] + UDP + H(+). The catalysed reaction is an N(4)-{beta-D-GlcNAc-(1-&gt;2)-alpha-D-Man-(1-&gt;3)-[beta-D-Gal-(1-&gt;4)-beta-D-GlcNAc-(1-&gt;2)-alpha-D-Man-(1-&gt;6)]-beta-D-Man-(1-&gt;4)-beta-D-GlcNAc-(1-&gt;4)-beta-D-GlcNAc}-L-asparaginyl-[protein] + UDP-N-acetyl-alpha-D-glucosamine = an N(4)-{beta-D-GlcNAc-(1-&gt;2)-[beta-D-GlcNAc-(1-&gt;4)]-alpha-D-Man-(1-&gt;3)-[beta-D-Gal-(1-&gt;4)-beta-D-GlcNAc-(1-&gt;2)-alpha-D-Man-(1-&gt;6)]-beta-D-Man-(1-&gt;4)-beta-D-GlcNAc-(1-&gt;4)-beta-D-GlcNAc}-L-asparaginyl-[protein] + UDP + H(+). The enzyme catalyses N(4)-{beta-D-GlcNAc-(1-&gt;2)-alpha-D-Man-(1-&gt;3)-[alpha-D-Man-(1-&gt;3)-{alpha-D-Man-(1-&gt;6)}-alpha-D-Man-(1-&gt;6)]-beta-D-Man-(1-&gt;4)-beta-D-GlcNAc-(1-&gt;4)-beta-D-GlcNAc}-asparaginyl-[protein] + UDP-N-acetyl-alpha-D-glucosamine = N(4)-{beta-D-GlcNAc-(1-&gt;2)-[beta-D-GlcNAc-(1-&gt;4)]-alpha-D-Man-(1-&gt;3)-[alpha-D-Man-(1-&gt;3)-{alpha-D-Man-(1-&gt;6)}-alpha-D-Man-(1-&gt;6)]-beta-D-Man-(1-&gt;4)-beta-D-GlcNAc-(1-&gt;4)-beta-D-GlcNAc}-asparaginyl-[protein] + UDP + H(+). It carries out the reaction N(4)-{beta-D-GlcNAc-(1-&gt;2)-alpha-D-Man-(1-&gt;3)-beta-D-Man-(1-&gt;4)-beta-D-GlcNAc-(1-&gt;4)-beta-D-GlcNAc}-asparaginyl-[protein] + UDP-N-acetyl-alpha-D-glucosamine = N(4)-{beta-D-GlcNAc-(1-&gt;2)-[beta-D-GlcNAc-(1-&gt;4)]-alpha-D-Man-(1-&gt;3)-beta-D-Man-(1-&gt;4)-beta-D-GlcNAc-(1-&gt;4)-beta-D-GlcNAc}-asparaginyl-[protein] + UDP + H(+). The protein operates within protein modification; protein glycosylation. With respect to regulation, inhibited by UDP. In terms of biological role, glycosyltransferase that catalyze the transfer of GlcNAc from UDP-GlcNAc to the GlcNAcbeta1-2Manalpha1-3 arm of the core structure of N-linked glycans through a beta1-4 linkage and participates in the production of tri- and tetra-antennary N-linked sugar chains. Involved in glucose transport by mediating SLC2A2/GLUT2 glycosylation, thereby controlling cell-surface expression of SLC2A2 in pancreatic beta cells. The protein is Alpha-1,3-mannosyl-glycoprotein 4-beta-N-acetylglucosaminyltransferase A of Pongo abelii (Sumatran orangutan).